A 133-amino-acid polypeptide reads, in one-letter code: Small ribosomal subunit protein uS8 (133 aa).

The protein belongs to the universal ribosomal protein uS8 family. As to quaternary structure, part of the 30S ribosomal subunit. Contacts proteins S5 and S12.

In terms of biological role, one of the primary rRNA binding proteins, it binds directly to 16S rRNA central domain where it helps coordinate assembly of the platform of the 30S subunit. The protein is Small ribosomal subunit protein uS8 of Nostoc punctiforme (strain ATCC 29133 / PCC 73102).